Consider the following 339-residue polypeptide: ATPase GET3 (339 aa).

Residue 34 to 41 participates in ATP binding; sequence KGGVGKTT. Residue Asp-63 is part of the active site. ATP-binding residues include Glu-243 and Asn-270. Zn(2+) contacts are provided by Cys-281 and Cys-284.

Belongs to the arsA ATPase family. In terms of assembly, homodimer.

The protein resides in the cytoplasm. The protein localises to the endoplasmic reticulum. In terms of biological role, ATPase required for the post-translational delivery of tail-anchored (TA) proteins to the endoplasmic reticulum. Recognizes and selectively binds the transmembrane domain of TA proteins in the cytosol. This complex then targets to the endoplasmic reticulum by membrane-bound receptors, where the tail-anchored protein is released for insertion. This process is regulated by ATP binding and hydrolysis. ATP binding drives the homodimer towards the closed dimer state, facilitating recognition of newly synthesized TA membrane proteins. ATP hydrolysis is required for insertion. Subsequently, the homodimer reverts towards the open dimer state, lowering its affinity for the membrane-bound receptor, and returning it to the cytosol to initiate a new round of targeting. In Coccidioides immitis (strain RS) (Valley fever fungus), this protein is ATPase GET3.